We begin with the raw amino-acid sequence, 653 residues long: Brain-enriched guanylate kinase-associated protein (653 aa).

At Tyr186 the chain carries Phosphotyrosine. The segment at 241-271 (PGSLSSHLSEASAQDLGFPEGLEKPGSRPPY) is disordered. Positions 243–252 (SLSSHLSEAS) are enriched in polar residues. Phosphoserine is present on residues Ser249, Ser278, Ser295, and Ser314. The disordered stretch occupies residues 288–329 (RHQDRRPSVEGPGSDVGFLQAQNSTDSTAEEEEEEEEDTEAG). Positions 315–327 (TAEEEEEEEEDTE) are enriched in acidic residues. Residues Ser400 and Ser427 each carry the phosphoserine modification. Position 435 is an asymmetric dimethylarginine (Arg435). Residues Ser523, Ser533, Ser535, Ser558, Ser560, Ser564, Ser613, and Ser623 each carry the phosphoserine modification. The disordered stretch occupies residues 587-653 (GASGSPEPEL…KAQLYGTLLN (67 aa)).

Interacts with DLG4 and DLGAP1 and forms a ternary complex.

The protein localises to the cytoplasm. The protein resides in the membrane. In terms of biological role, may sustain the structure of the postsynaptic density (PSD). The polypeptide is Brain-enriched guanylate kinase-associated protein (BEGAIN) (Ovis aries (Sheep)).